The chain runs to 387 residues: tRNA pseudouridine synthase B (387 aa).

The active-site Nucleophile is Asp-43.

This sequence belongs to the pseudouridine synthase TruB family. Type 1 subfamily.

The catalysed reaction is uridine(55) in tRNA = pseudouridine(55) in tRNA. Its function is as follows. Responsible for synthesis of pseudouridine from uracil-55 in the psi GC loop of transfer RNAs. The sequence is that of tRNA pseudouridine synthase B from Bifidobacterium longum (strain DJO10A).